A 355-amino-acid polypeptide reads, in one-letter code: UDP-N-acetylglucosamine--N-acetylmuramyl-(pentapeptide) pyrophosphoryl-undecaprenol N-acetylglucosamine transferase (355 aa).

Residues 14–16 (TGG), asparagine 126, arginine 162, serine 190, isoleucine 243, 262–267 (ALTVSE), and glutamine 287 contribute to the UDP-N-acetyl-alpha-D-glucosamine site.

This sequence belongs to the glycosyltransferase 28 family. MurG subfamily.

It is found in the cell inner membrane. The catalysed reaction is di-trans,octa-cis-undecaprenyl diphospho-N-acetyl-alpha-D-muramoyl-L-alanyl-D-glutamyl-meso-2,6-diaminopimeloyl-D-alanyl-D-alanine + UDP-N-acetyl-alpha-D-glucosamine = di-trans,octa-cis-undecaprenyl diphospho-[N-acetyl-alpha-D-glucosaminyl-(1-&gt;4)]-N-acetyl-alpha-D-muramoyl-L-alanyl-D-glutamyl-meso-2,6-diaminopimeloyl-D-alanyl-D-alanine + UDP + H(+). It participates in cell wall biogenesis; peptidoglycan biosynthesis. In terms of biological role, cell wall formation. Catalyzes the transfer of a GlcNAc subunit on undecaprenyl-pyrophosphoryl-MurNAc-pentapeptide (lipid intermediate I) to form undecaprenyl-pyrophosphoryl-MurNAc-(pentapeptide)GlcNAc (lipid intermediate II). The polypeptide is UDP-N-acetylglucosamine--N-acetylmuramyl-(pentapeptide) pyrophosphoryl-undecaprenol N-acetylglucosamine transferase (Vibrio vulnificus (strain CMCP6)).